The primary structure comprises 812 residues: MAQHLLHGTLHATIYEVDALHTGGLRSAGFLGKIISNVEETIGFGKGETQLYATIDLQKARVGRTRKITDEPKNPKWYESFHIYCAHMASDIIFTVKDDNPIGATLIGRAYVPVDEVINGEEVEKWVEILDDDRNPIHGESKIHVKLQYFAVEADRNWNMGVKSAKFPGVPYTFFSQRQGCKVSLYQGAHVPDNFVPKIPLAGGKNYEPHRCWEDIFDAITNAKHLIYITGWSVYTEITLVRDSRRPKPGGDMTLGELLKKKATEGVRVLLLVWDDRTSVDVLKKDGLMATHDEDTENYFNGSEVHCVLCPRNPDDGGSIVQNLQVSAMFTHHQKIVVVDSEVPSQGGGSEMRRIMSFVGGIDLCDGRYDTPFHSLFRTLDTVHHDDFHQPNFTGASITKGGPREPWQDIHSRLEGPIAWDVLYNFEQRWSKQGGKDILVKLRELSDIIITPSPVMFQEDHDVWNVQLFRSIDGGAAAGFPDSPEVAAEAGLVSGKDNVIDRSIQDAYIHAIRRAKDFIYIENQYFLGSSFAWAADGITPEDINALHLIPKELSLKIVDKIEKGEKFRVYVVVPMWPEGIPESASVQAILDWQRRTLEMMYKDVTQALRAQGLEEDPRNYLTFFCLGNREVKKEGEYEPAERPDPDTDYMRAQEARRFMIYVHSKMMIVDDEYIIVGSANINQRSMDGARDSEIAMGGYQPHHLSHRQPARGQVHGFRMSLWYEHLGMLDETFLDPSSLECIEKVNRIADKYWDFYSSESLEHDLPGHLLRYPISVDNEGNITELPGFEFFPDSKARILGNKVDYLPPILTT.

A propeptide spanning residues 1-36 (MAQHLLHGTLHATIYEVDALHTGGLRSAGFLGKIIS) is cleaved from the precursor. The C2 domain maps to 1 to 127 (MAQHLLHGTL…INGEEVEKWV (127 aa)). Residues 328 to 368 (AMFTHHQKIVVVDSEVPSQGGGSEMRRIMSFVGGIDLCDGR) form the PLD phosphodiesterase 1 domain. Active-site residues include His-333, Lys-335, and Asp-340. A 1,2-diacyl-sn-glycero-3-phosphate is bound at residue His-333. His-374 contacts Ca(2+). A 1,2-diacyl-sn-glycero-3-phosphate-binding residues include Gln-524 and His-663. One can recognise a PLD phosphodiesterase 2 domain in the interval 658 to 685 (FMIYVHSKMMIVDDEYIIVGSANINQRS). Residues His-663, Lys-665, and Asp-670 contribute to the active site. Glu-724 serves as a coordination point for Ca(2+).

This sequence belongs to the phospholipase D family. C2-PLD subfamily. It depends on Ca(2+) as a cofactor.

It localises to the cytoplasm. The protein resides in the membrane. The catalysed reaction is a 1,2-diacyl-sn-glycero-3-phosphocholine + H2O = a 1,2-diacyl-sn-glycero-3-phosphate + choline + H(+). Functionally, hydrolyzes glycerol-phospholipids at the terminal phosphodiesteric bond. Plays an important role in various cellular processes, including phytohormone action, vesicular trafficking, secretion, cytoskeletal arrangement, meiosis, tumor promotion, pathogenesis, membrane deterioration and senescence. This Brassica oleracea var. capitata (Cabbage) protein is Phospholipase D alpha 2 (PLD2).